The primary structure comprises 452 residues: Tripartite motif-containing protein 49 (452 aa).

The RING-type zinc-finger motif lies at 15 to 56 (CPLCMNYFIDPVTIDCGHSFCRPCFYLNWQDIPFLVQCSECT). The B box-type zinc-finger motif lies at 88 to 129 (SEEQMCGTHRETKKIFCEVDRSLLCLLCSSSQEHRYHRHRPI). Cys-93, His-96, Cys-115, and His-121 together coordinate Zn(2+). Positions 269-452 (ELSAGPITGL…LRPIFCCIHF (184 aa)) constitute a B30.2/SPRY domain.

The protein belongs to the TRIM/RBCC family. Preferentially expressed in testis.

This chain is Tripartite motif-containing protein 49 (TRIM49), found in Homo sapiens (Human).